A 292-amino-acid chain; its full sequence is Homoserine kinase (292 aa).

80–90 (PLARGLGSSSS) lines the ATP pocket.

This sequence belongs to the GHMP kinase family. Homoserine kinase subfamily.

Its subcellular location is the cytoplasm. The catalysed reaction is L-homoserine + ATP = O-phospho-L-homoserine + ADP + H(+). The protein operates within amino-acid biosynthesis; L-threonine biosynthesis; L-threonine from L-aspartate: step 4/5. In terms of biological role, catalyzes the ATP-dependent phosphorylation of L-homoserine to L-homoserine phosphate. The chain is Homoserine kinase from Leuconostoc mesenteroides subsp. mesenteroides (strain ATCC 8293 / DSM 20343 / BCRC 11652 / CCM 1803 / JCM 6124 / NCDO 523 / NBRC 100496 / NCIMB 8023 / NCTC 12954 / NRRL B-1118 / 37Y).